Here is a 261-residue protein sequence, read N- to C-terminus: UPF0246 protein Vapar_1301 (261 aa).

Belongs to the UPF0246 family.

This Variovorax paradoxus (strain S110) protein is UPF0246 protein Vapar_1301.